The following is a 123-amino-acid chain: Sterol carrier protein 2 (123 aa).

Positions 16 to 113 constitute an SCP2 domain; that stretch reads KEHLSTDAGK…GSLSAAQKFT (98 aa). The Microbody targeting signal motif lies at 121–123; sequence SKL.

As to expression, expressed in most tissues including seedlings, cotyledons, inflorescence, leaves, stems, roots, siliques and flower buds, with the highest levels in floral tissues and in maturing seeds.

The protein resides in the peroxisome. In terms of biological role, enhances the transfer of lipids between membranes in vitro. Active on phosphatidylcholine (PC), 1-palmitoyl 2-oleoyl phosphatidylcholine (POPC) and ergosterol, and, to a lower extent, dimyristoyl phosphatidic acid, stigmasterol, desmosterol, beta-sitosterol and steryl glucoside. Inactive or poorly active on palmitic acid, stearoyl-coenzyme A, cholesterol, glucosylceramide and ceramide. Required during seeds and seedlings development. The polypeptide is Sterol carrier protein 2 (Arabidopsis thaliana (Mouse-ear cress)).